The sequence spans 433 residues: Divalent metal cation transporter MntH (433 aa).

Helical transmembrane passes span 32-52 (LIFA…GNFA), 62-82 (GYDL…FQGL), 101-121 (TLPP…AMAT), 131-151 (IGIA…TGIV), 168-188 (LVIG…LLIV), 209-229 (ALTI…LFLH), 256-276 (VLAA…MAAG), 296-316 (SPLL…ASGV), 345-365 (ALTM…TRAL), 366-386 (VLSQ…LLWF), and 401-421 (ITAI…VILL).

The protein belongs to the NRAMP family.

It is found in the cell inner membrane. In terms of biological role, h(+)-stimulated, divalent metal cation uptake system. The chain is Divalent metal cation transporter MntH from Acidiphilium cryptum (strain JF-5).